The primary structure comprises 206 residues: Dehydration-responsive element-binding protein 2D (206 aa).

The segment at 13-40 is disordered; sequence ANKKQRTVQASSRKGCMRGKGGPDNASC. The segment at residues 41 to 98 is a DNA-binding region (AP2/ERF); the sequence is TYKGVRQRTWGKWVAEIREPNRGARLWLGTFDTSREAALAYDSAARKLYGPEAHLNLP. A disordered region spans residues 102 to 139; that stretch reads RSYPKTASSPASQTTPSSNTGGKSSSDSESPCSSNEMS. The segment covering 107–139 has biased composition (low complexity); that stretch reads TASSPASQTTPSSNTGGKSSSDSESPCSSNEMS.

Belongs to the AP2/ERF transcription factor family. ERF subfamily.

It localises to the nucleus. Its function is as follows. Putative transcriptional activator that binds specifically to the DNA sequence 5'-[AG]CCGAC-3'. Binding to the C-repeat/DRE element mediates high salinity-inducible transcription. The polypeptide is Dehydration-responsive element-binding protein 2D (DREB2D) (Arabidopsis thaliana (Mouse-ear cress)).